The following is a 355-amino-acid chain: Protein-glutamate methylesterase/protein-glutamine glutaminase (355 aa).

Residues 7–123 (AAVVVDDSQF…SVGIKQQQDE (117 aa)) enclose the Response regulatory domain. At Asp57 the chain carries 4-aspartylphosphate. Residues 139-159 (TEAAAERTTSTATSTTTSRSA) are disordered. A CheB-type methylesterase domain is found at 161 to 355 (EYVDKPTLVI…DGVLDTIMRE (195 aa)). Residues Ser173, His200, and Asp297 contribute to the active site.

Belongs to the CheB family. Post-translationally, phosphorylated by CheA. Phosphorylation of the N-terminal regulatory domain activates the methylesterase activity.

It is found in the cytoplasm. It catalyses the reaction [protein]-L-glutamate 5-O-methyl ester + H2O = L-glutamyl-[protein] + methanol + H(+). The enzyme catalyses L-glutaminyl-[protein] + H2O = L-glutamyl-[protein] + NH4(+). Involved in chemotaxis. Part of a chemotaxis signal transduction system that modulates chemotaxis in response to various stimuli. Catalyzes the demethylation of specific methylglutamate residues introduced into the chemoreceptors (methyl-accepting chemotaxis proteins or MCP) by CheR. Also mediates the irreversible deamidation of specific glutamine residues to glutamic acid. The protein is Protein-glutamate methylesterase/protein-glutamine glutaminase of Natronomonas pharaonis (strain ATCC 35678 / DSM 2160 / CIP 103997 / JCM 8858 / NBRC 14720 / NCIMB 2260 / Gabara) (Halobacterium pharaonis).